The following is a 395-amino-acid chain: Octopamine receptor beta-2R (395 aa).

Residues 1–42 (MDPINGSHSGANATISDITNGAYNATDAGEWTSSVMFKLRTC) are Extracellular-facing. Asn5, Asn12, and Asn24 each carry an N-linked (GlcNAc...) asparagine glycan. The helical transmembrane segment at 43–63 (VLLLIVIMAVLGNMLVIVSVM) threads the bilayer. At 64 to 74 (RHRKLRVITNY) the chain is on the cytoplasmic side. Residues 75-95 (FVVSLAFADILVAMVVMPFNF) traverse the membrane as a helical segment. The Extracellular portion of the chain corresponds to 96–117 (SVQFNQGWVFGETICDLWNSSD). Residue Asn114 is glycosylated (N-linked (GlcNAc...) asparagine). The helical transmembrane segment at 118–140 (VYFTSTSILHLCCISVDRYYAIV) threads the bilayer. The Cytoplasmic portion of the chain corresponds to 141 to 154 (KPLKYPIKMTKKMA). A helical transmembrane segment spans residues 155-175 (FVMLAATWLSPITISYVPIFM). Over 176 to 202 (GWYTTTDFLESRRDDQCEFKVNKPYAV) the chain is Extracellular. Residues 203 to 223 (ISSSISFWIPCTIMIFTYLAI) form a helical membrane-spanning segment. Residues 224 to 282 (FKEANRQEKALHARAGNAMLMHRHSREVSDKNGALHINATTPTKDRNLLKMKREHKAAR) lie on the Cytoplasmic side of the membrane. A helical membrane pass occupies residues 283–303 (TLGIIMGAFILCWLPFFLYYV). Topologically, residues 304-315 (STSLCDSCNCPE) are extracellular. Residues 316 to 336 (VVTVIMFWTGYFNSALNPIIY) form a helical membrane-spanning segment. At 337–395 (AYFNRDFRNAFKNTLACAFCSFCKRSASDLDAMERLDRRGSAQLRVPIPSRRASDLASL) the chain is on the cytoplasmic side.

It belongs to the G-protein coupled receptor 1 family.

It is found in the cell membrane. Functionally, autoreceptor for octopamine, which is a neurotransmitter, neurohormone, and neuromodulator in invertebrates. Also acts as a receptor for tyramine, but with much less potency. The activity of this receptor is mediated by G proteins which activate adenylyl cyclase. This is Octopamine receptor beta-2R from Chilo suppressalis (Asiatic rice borer moth).